We begin with the raw amino-acid sequence, 424 residues long: Methylenetetrahydrofolate--tRNA-(uracil-5-)-methyltransferase TrmFO 1 (424 aa).

8–13 (GAGLSG) is an FAD binding site.

Belongs to the MnmG family. TrmFO subfamily. FAD serves as cofactor.

The protein resides in the cytoplasm. It catalyses the reaction uridine(54) in tRNA + (6R)-5,10-methylene-5,6,7,8-tetrahydrofolate + NADH + H(+) = 5-methyluridine(54) in tRNA + (6S)-5,6,7,8-tetrahydrofolate + NAD(+). The enzyme catalyses uridine(54) in tRNA + (6R)-5,10-methylene-5,6,7,8-tetrahydrofolate + NADPH + H(+) = 5-methyluridine(54) in tRNA + (6S)-5,6,7,8-tetrahydrofolate + NADP(+). Functionally, catalyzes the folate-dependent formation of 5-methyl-uridine at position 54 (M-5-U54) in all tRNAs. The polypeptide is Methylenetetrahydrofolate--tRNA-(uracil-5-)-methyltransferase TrmFO 1 (Mycoplasma mycoides subsp. mycoides SC (strain CCUG 32753 / NCTC 10114 / PG1)).